The primary structure comprises 553 residues: ATP synthase F(1) complex subunit alpha, mitochondrial (553 aa).

Residues 1-43 constitute a mitochondrion transit peptide; it reads MLSVRVAAAVVRALPRRAGLVSRNALGSSFIAARNFHASNTHL. 2 positions are modified to phosphoserine: Ser-53 and Ser-65. The residue at position 76 (Ser-76) is a Phosphoserine; alternate. An O-linked (GlcNAc) serine; alternate glycan is attached at Ser-76. Ser-106 carries the post-translational modification Phosphoserine. 3 positions are modified to N6-acetyllysine: Lys-123, Lys-126, and Lys-132. A Phosphothreonine modification is found at Thr-134. Lys-161 is subject to N6-acetyllysine; alternate. Residue Lys-161 is modified to N6-succinyllysine; alternate. Residue Ser-166 is modified to Phosphoserine. N6-acetyllysine; alternate is present on Lys-167. N6-succinyllysine; alternate is present on Lys-167. Ser-184 is modified (phosphoserine). Residue Arg-204 is modified to Omega-N-methylarginine. 5 residues coordinate ATP: Gln-215, Gly-217, Lys-218, Thr-219, and Ser-220. Thr-219 serves as a coordination point for Mg(2+). N6-acetyllysine; alternate is present on residues Lys-230 and Lys-239. An N6-succinyllysine; alternate mark is found at Lys-230 and Lys-239. Lys-240 bears the N6-acetyllysine mark. N6-acetyllysine; alternate occurs at positions 261 and 305. 2 positions are modified to N6-succinyllysine; alternate: Lys-261 and Lys-305. Asp-312 serves as a coordination point for Mg(2+). An N6-acetyllysine; alternate modification is found at Lys-427. Lys-427 carries the N6-succinyllysine; alternate modification. At Lys-434 the chain carries N6-acetyllysine. Residues Gln-473 and Gln-475 each coordinate ATP. Lys-498, Lys-506, Lys-531, and Lys-539 each carry N6-acetyllysine; alternate. Lys-498, Lys-506, Lys-531, and Lys-539 each carry N6-succinyllysine; alternate. Lys-541 is subject to N6-acetyllysine.

The protein belongs to the ATPase alpha/beta chains family. As to quaternary structure, homotrimer. Component of the ATP synthase complex composed at least of ATP5F1A/subunit alpha, ATP5F1B/subunit beta, ATP5MC1/subunit c (homooctomer), MT-ATP6/subunit a, MT-ATP8/subunit 8, ATP5ME/subunit e, ATP5MF/subunit f, ATP5MG/subunit g, ATP5MK/subunit k, ATP5MJ/subunit j, ATP5F1C/subunit gamma, ATP5F1D/subunit delta, ATP5F1E/subunit epsilon, ATP5PF/subunit F6, ATP5PB/subunit b, ATP5PD/subunit d, ATP5PO/subunit OSCP. ATP synthase complex consists of a soluble F(1) head domain (subunits alpha(3) and beta(3)) - the catalytic core - and a membrane F(0) domain - the membrane proton channel (subunits c, a, 8, e, f, g, k and j). These two domains are linked by a central stalk (subunits gamma, delta, and epsilon) rotating inside the F1 region and a stationary peripheral stalk (subunits F6, b, d, and OSCP). Interacts with ATPAF2. Interacts with HRG; the interaction occurs on the surface of T-cells and alters the cell morphology when associated with concanavalin (in vitro). Interacts with PLG (angiostatin peptide); the interaction inhibits most of the angiogenic properties of angiostatin. Interacts with BLOC1S1. Interacts with BCL2L1 isoform BCL-X(L); the interaction mediates the association of BCL2L1 isoform BCL-X(L) with the mitochondrial membrane F(1)F(0) ATP synthase and enhances neurons metabolic efficiency. Interacts with CLN5 and PPT1. Interacts with S100A1; this interaction increases F1-ATPase activity. Interacts with ABCB7; this interaction allows the regulation of cellular iron homeostasis and cellular reactive oxygen species (ROS) levels in cardiomyocytes. Acetylated on lysine residues. BLOC1S1 is required for acetylation.

It localises to the mitochondrion inner membrane. The protein resides in the cell membrane. In terms of biological role, subunit alpha, of the mitochondrial membrane ATP synthase complex (F(1)F(0) ATP synthase or Complex V) that produces ATP from ADP in the presence of a proton gradient across the membrane which is generated by electron transport complexes of the respiratory chain. ATP synthase complex consist of a soluble F(1) head domain - the catalytic core - and a membrane F(1) domain - the membrane proton channel. These two domains are linked by a central stalk rotating inside the F(1) region and a stationary peripheral stalk. During catalysis, ATP synthesis in the catalytic domain of F(1) is coupled via a rotary mechanism of the central stalk subunits to proton translocation. In vivo, can only synthesize ATP although its ATP hydrolase activity can be activated artificially in vitro. With the catalytic subunit beta (ATP5F1B), forms the catalytic core in the F(1) domain. Subunit alpha does not bear the catalytic high-affinity ATP-binding sites. This chain is ATP synthase F(1) complex subunit alpha, mitochondrial, found in Pan troglodytes (Chimpanzee).